The primary structure comprises 374 residues: Pectate lyase 1 (374 aa).

Residues 1–22 form the signal peptide; that stretch reads MKYLLPSAAAGLLLLAAQPTMA. Cysteines 93 and 176 form a disulfide. The Ca(2+) site is built by Asp-150, Asp-152, Glu-187, and Asp-191. Arg-239 is an active-site residue. A disulfide bridge links Cys-350 with Cys-373.

The protein belongs to the polysaccharide lyase 1 family. PLADES subfamily. It depends on Ca(2+) as a cofactor.

The protein resides in the secreted. The catalysed reaction is Eliminative cleavage of (1-&gt;4)-alpha-D-galacturonan to give oligosaccharides with 4-deoxy-alpha-D-galact-4-enuronosyl groups at their non-reducing ends.. The protein operates within glycan metabolism; pectin degradation; 2-dehydro-3-deoxy-D-gluconate from pectin: step 2/5. In terms of biological role, involved in maceration and soft-rotting of plant tissue. The chain is Pectate lyase 1 (pel1) from Pectobacterium atrosepticum (strain SCRI 1043 / ATCC BAA-672) (Erwinia carotovora subsp. atroseptica).